A 311-amino-acid polypeptide reads, in one-letter code: GTP cyclohydrolase FolE2 (311 aa).

Belongs to the GTP cyclohydrolase IV family.

The catalysed reaction is GTP + H2O = 7,8-dihydroneopterin 3'-triphosphate + formate + H(+). It participates in cofactor biosynthesis; 7,8-dihydroneopterin triphosphate biosynthesis; 7,8-dihydroneopterin triphosphate from GTP: step 1/1. Its function is as follows. Converts GTP to 7,8-dihydroneopterin triphosphate. The chain is GTP cyclohydrolase FolE2 from Xanthomonas campestris pv. campestris (strain B100).